Reading from the N-terminus, the 742-residue chain is RING finger protein 145 homolog (742 aa).

11 helical membrane passes run 109-129 (AAII…TLPL), 138-158 (HFLS…YVDL), 178-198 (HGFH…LLEV), 233-253 (ACTG…PSLI), 285-305 (ILEL…YVEL), 318-338 (ILLT…ALAV), 368-388 (SGYT…FLGM), 395-415 (ILLA…LFEI), 438-458 (ICIA…MLAL), 463-483 (IYTA…IGVI), and 533-553 (VKVG…IVNI). The RING-type; atypical zinc finger occupies 592–630 (CAICFIEMKEEARITPCKHYFHGPCLRKWLAVKMVCPLC). Disordered stretches follow at residues 642–684 (KSSS…PGDM) and 722–742 (AYES…ENNN). A compositionally biased stretch (acidic residues) spans 659 to 672 (AAVEENPENPEEQP).

Its subcellular location is the membrane. The protein resides in the golgi apparatus. The protein localises to the cis-Golgi network. It localises to the trans-Golgi network. It carries out the reaction S-ubiquitinyl-[E2 ubiquitin-conjugating enzyme]-L-cysteine + [acceptor protein]-L-lysine = [E2 ubiquitin-conjugating enzyme]-L-cysteine + N(6)-ubiquitinyl-[acceptor protein]-L-lysine.. E3 ubiquitin ligase that catalyzes the direct transfer of ubiquitin from E2 ubiquitin-conjugating enzyme to a specific substrate. Acting downstream of probable Golgi transport protein eas-1, involved in inhibition of activation of transcription factor sbp-1, thereby playing a role in regulating AMsh glial cell size. The polypeptide is RING finger protein 145 homolog (Caenorhabditis elegans).